Here is a 173-residue protein sequence, read N- to C-terminus: Translocon-associated protein subunit delta (173 aa).

An N-terminal signal peptide occupies residues 1–23; the sequence is MAAMASFGALALLLLSGLSCCSA. At 24-144 the chain is on the lumenal side; sequence EACLEPQITP…SVDHRGTWNG (121 aa). The cysteines at positions 26 and 57 are disulfide-linked. A Glycyl lysine isopeptide (Lys-Gly) (interchain with G-Cter in ubiquitin) cross-link involves residue lysine 73. A helical transmembrane segment spans residues 145–165; it reads PWVSTEVLAAAIGIVIYYLAF. Over 166–173 the chain is Cytoplasmic; that stretch reads SAKSHIQA.

It belongs to the TRAP-delta family. Heterotetramer of TRAP-alpha, TRAP-beta, TRAP-delta and TRAP-gamma.

The protein resides in the endoplasmic reticulum membrane. Its function is as follows. TRAP proteins are part of a complex whose function is to bind calcium to the ER membrane and thereby regulate the retention of ER resident proteins. This chain is Translocon-associated protein subunit delta (Ssr4), found in Rattus norvegicus (Rat).